The chain runs to 384 residues: Homoserine O-succinyltransferase (384 aa).

The 311-residue stretch at 51–361 (NAILICHALS…ETSQGHDAFL (311 aa)) folds into the AB hydrolase-1 domain. The Nucleophile role is filled by S157. R227 contacts substrate. Catalysis depends on residues D324 and H357. D358 is a binding site for substrate.

This sequence belongs to the AB hydrolase superfamily. MetX family. Homodimer.

It is found in the cytoplasm. The enzyme catalyses L-homoserine + succinyl-CoA = O-succinyl-L-homoserine + CoA. It functions in the pathway amino-acid biosynthesis; L-methionine biosynthesis via de novo pathway; O-succinyl-L-homoserine from L-homoserine: step 1/1. Its function is as follows. Transfers a succinyl group from succinyl-CoA to L-homoserine, forming succinyl-L-homoserine. The chain is Homoserine O-succinyltransferase from Alkalilimnicola ehrlichii (strain ATCC BAA-1101 / DSM 17681 / MLHE-1).